A 159-amino-acid chain; its full sequence is Protein-export protein SecB (159 aa).

Belongs to the SecB family. As to quaternary structure, homotetramer, a dimer of dimers. One homotetramer interacts with 1 SecA dimer.

The protein localises to the cytoplasm. In terms of biological role, one of the proteins required for the normal export of preproteins out of the cell cytoplasm. It is a molecular chaperone that binds to a subset of precursor proteins, maintaining them in a translocation-competent state. It also specifically binds to its receptor SecA. The polypeptide is Protein-export protein SecB (Nitrobacter hamburgensis (strain DSM 10229 / NCIMB 13809 / X14)).